Reading from the N-terminus, the 360-residue chain is Methylthioribose-1-phosphate isomerase (360 aa).

Aspartate 246 (proton donor) is an active-site residue.

Belongs to the eIF-2B alpha/beta/delta subunits family. MtnA subfamily.

It is found in the cytoplasm. Its subcellular location is the nucleus. It catalyses the reaction 5-(methylsulfanyl)-alpha-D-ribose 1-phosphate = 5-(methylsulfanyl)-D-ribulose 1-phosphate. Its pathway is amino-acid biosynthesis; L-methionine biosynthesis via salvage pathway; L-methionine from S-methyl-5-thio-alpha-D-ribose 1-phosphate: step 1/6. Its function is as follows. Catalyzes the interconversion of methylthioribose-1-phosphate (MTR-1-P) into methylthioribulose-1-phosphate (MTRu-1-P). The protein is Methylthioribose-1-phosphate isomerase of Aedes aegypti (Yellowfever mosquito).